We begin with the raw amino-acid sequence, 118 residues long: Large ribosomal subunit protein bL19 (118 aa).

It belongs to the bacterial ribosomal protein bL19 family.

In terms of biological role, this protein is located at the 30S-50S ribosomal subunit interface and may play a role in the structure and function of the aminoacyl-tRNA binding site. This is Large ribosomal subunit protein bL19 from Dictyoglomus thermophilum (strain ATCC 35947 / DSM 3960 / H-6-12).